The sequence spans 254 residues: MQYQVDTHTHTVASSHAYSTIHDYIAVAKQKGIRLFANTDHGPAMADAPHFWHFVNLRVLPRMVDGVGILRGIEANIKNIDGEIDFFGDYLKQLDIVLAGFHEPVYPPSDKATHTEAMINTIKSGKVDIITHPGNPAYPIDIEAVARAAAEYGVALEINNSSFEVSRKGSEANCTAIAKAAKEFGTILVMGSDSHVAFSLGGFARAQAIIDEVAYPPSRLLNRSPSALLAFLAARGHETVADLIPLFSDDEPCC.

H8, H10, H16, H41, E74, H102, H132, D193, and H195 together coordinate Zn(2+).

This sequence belongs to the PHP family. The cofactor is Zn(2+).

This chain is Probable phosphatase Sbal_1472, found in Shewanella baltica (strain OS155 / ATCC BAA-1091).